The sequence spans 419 residues: Glutamyl-tRNA reductase (419 aa).

Substrate is bound by residues 49–52 (TCNR), S107, 112–114 (EPQ), and Q118. The active-site Nucleophile is the C50. 187–192 (GAGETI) serves as a coordination point for NADP(+).

The protein belongs to the glutamyl-tRNA reductase family. Homodimer.

The enzyme catalyses (S)-4-amino-5-oxopentanoate + tRNA(Glu) + NADP(+) = L-glutamyl-tRNA(Glu) + NADPH + H(+). It functions in the pathway porphyrin-containing compound metabolism; protoporphyrin-IX biosynthesis; 5-aminolevulinate from L-glutamyl-tRNA(Glu): step 1/2. Functionally, catalyzes the NADPH-dependent reduction of glutamyl-tRNA(Glu) to glutamate 1-semialdehyde (GSA). In Vibrio atlanticus (strain LGP32) (Vibrio splendidus (strain Mel32)), this protein is Glutamyl-tRNA reductase.